Reading from the N-terminus, the 564-residue chain is Proline--tRNA ligase (564 aa).

The protein belongs to the class-II aminoacyl-tRNA synthetase family. ProS type 1 subfamily. Homodimer.

It is found in the cytoplasm. The enzyme catalyses tRNA(Pro) + L-proline + ATP = L-prolyl-tRNA(Pro) + AMP + diphosphate. In terms of biological role, catalyzes the attachment of proline to tRNA(Pro) in a two-step reaction: proline is first activated by ATP to form Pro-AMP and then transferred to the acceptor end of tRNA(Pro). As ProRS can inadvertently accommodate and process non-cognate amino acids such as alanine and cysteine, to avoid such errors it has two additional distinct editing activities against alanine. One activity is designated as 'pretransfer' editing and involves the tRNA(Pro)-independent hydrolysis of activated Ala-AMP. The other activity is designated 'posttransfer' editing and involves deacylation of mischarged Ala-tRNA(Pro). The misacylated Cys-tRNA(Pro) is not edited by ProRS. The chain is Proline--tRNA ligase from Xanthomonas axonopodis pv. citri (strain 306).